The following is a 490-amino-acid chain: GTPase Der (490 aa).

EngA-type G domains follow at residues 3–166 (PVVA…MEDL) and 203–376 (IKLA…DSST). GTP contacts are provided by residues 9-16 (GRPNVGKS), 56-60 (DTGGI), 118-121 (NKTD), 209-216 (GRPNVGKS), 256-260 (DTAGV), and 321-324 (NKWD). One can recognise a KH-like domain in the interval 377–461 (RRVGTSMLTR…PIRIQFKEGE (85 aa)).

Belongs to the TRAFAC class TrmE-Era-EngA-EngB-Septin-like GTPase superfamily. EngA (Der) GTPase family. In terms of assembly, associates with the 50S ribosomal subunit.

Its function is as follows. GTPase that plays an essential role in the late steps of ribosome biogenesis. This chain is GTPase Der, found in Escherichia coli O157:H7.